Consider the following 1452-residue polypeptide: ABC multidrug transporter A-1 (1452 aa).

The interval 1 to 20 is disordered; that stretch reads MNESHEAGKNSSTNVEEREE. 5 N-linked (GlcNAc...) asparagine glycosylation sites follow: Asn2, Asn10, Asn228, Asn287, and Asn311. Residues 110–363 form the ABC transporter 1 domain; the sequence is LKTLSLARIA…FLQMGFVCPD (254 aa). The next 6 membrane-spanning stretches (helical) occupy residues 474–494, 508–528, 554–574, 583–603, 616–636, and 725–745; these read VTIS…SIFY, ALLF…MLTL, MIMD…VLYF, GAFF…SMFF, VLPF…FAIP, and IGVI…ATDF. The ABC transporter 2 domain maps to 802 to 1044; sequence FQWKDVCFDI…ILIDYFVRNG (243 aa). 838 to 845 contributes to the ATP binding site; the sequence is GVSGAGKT. 6 consecutive transmembrane segments (helical) span residues 1153 to 1173, 1183 to 1203, 1223 to 1243, 1271 to 1291, 1297 to 1317, and 1324 to 1344; these read ALCV…PNTI, IFML…HFVA, FLIA…VLMF, LMIW…IAAF, AGNL…VLAT, and FWIF…MLSV. N-linked (GlcNAc...) asparagine glycans are attached at residues Asn1350, Asn1365, and Asn1391. A helical transmembrane segment spans residues 1418 to 1438; the sequence is FGLMWVFIVFNIFAACSLYWW.

Belongs to the ABC transporter superfamily. ABCG family. PDR (TC 3.A.1.205) subfamily.

The protein resides in the membrane. ABC transporter that seems not to be involved in the efflux of toxic substances, at least not the classical compounds such as itraconazole, amphotericin B, voriconazole, posaconazole, ravuconazole, or echinocandins. The protein is ABC multidrug transporter A-1 of Aspergillus fumigatus (strain ATCC MYA-4609 / CBS 101355 / FGSC A1100 / Af293) (Neosartorya fumigata).